Reading from the N-terminus, the 365-residue chain is MLTVGILGGGQLGWMTILEGRKLGFKFHVLEDKENAPACRVADRCFRTGQISEFVDSCDIITYEFEHIKDEVLEKCESKLIPNPQALYVKKSRIREKLFLKKHGFPVPEFLVIKRDEIIDALKSFKLPVVIKAEKLGYDGKGQYRIKKLEDANQVVKNHDKEESFIIEEFVKFEAEISCIGVRDREGKTYFYPQPFNKHEEGILIYNYVPYAKLKEAEEITKRLMELLDIVGVFTVEFFLLKDGRVLINEFAPRVHNTGHWTLDGAYTSQFENLLRAITEMPLGSTELKLPSGMVNILGKSYEEIPLKEILSVEGAKLYWYGKEKKPRRKVGHVNVVGRSKEEVVEKVERVFTLLKGSREKLPAP.

Residues Arg93, Lys132, 137–143 (GYDGKGQ), 168–171 (EEFV), Glu176, His199, and 249–250 (NE) each bind ATP. The ATP-grasp domain maps to 97-279 (KLFLKKHGFP…QFENLLRAIT (183 aa)).

This sequence belongs to the PurK/PurT family. Homodimer.

The enzyme catalyses 5-amino-1-(5-phospho-beta-D-ribosyl)imidazole + hydrogencarbonate + ATP = 5-carboxyamino-1-(5-phospho-D-ribosyl)imidazole + ADP + phosphate + 2 H(+). The protein operates within purine metabolism; IMP biosynthesis via de novo pathway; 5-amino-1-(5-phospho-D-ribosyl)imidazole-4-carboxylate from 5-amino-1-(5-phospho-D-ribosyl)imidazole (N5-CAIR route): step 1/2. Functionally, catalyzes the ATP-dependent conversion of 5-aminoimidazole ribonucleotide (AIR) and HCO(3)(-) to N5-carboxyaminoimidazole ribonucleotide (N5-CAIR). In Aquifex aeolicus (strain VF5), this protein is N5-carboxyaminoimidazole ribonucleotide synthase.